The chain runs to 390 residues: L-seryl-tRNA(Sec) selenium transferase (390 aa).

At Lys-225 the chain carries N6-(pyridoxal phosphate)lysine.

The protein belongs to the SelA family. Pyridoxal 5'-phosphate serves as cofactor.

It localises to the cytoplasm. The catalysed reaction is L-seryl-tRNA(Sec) + selenophosphate + H(+) = L-selenocysteinyl-tRNA(Sec) + phosphate. The protein operates within aminoacyl-tRNA biosynthesis; selenocysteinyl-tRNA(Sec) biosynthesis; selenocysteinyl-tRNA(Sec) from L-seryl-tRNA(Sec) (bacterial route): step 1/1. Functionally, converts seryl-tRNA(Sec) to selenocysteinyl-tRNA(Sec) required for selenoprotein biosynthesis. The polypeptide is L-seryl-tRNA(Sec) selenium transferase (Helicobacter pylori (strain J99 / ATCC 700824) (Campylobacter pylori J99)).